Here is a 560-residue protein sequence, read N- to C-terminus: Membrane protein insertase YidC (560 aa).

Transmembrane regions (helical) follow at residues 5-25 (IINLIAAVVLSLSIIFGWQYF), 334-354 (AIDFGWFYIITKPVFYAMNFF), 357-377 (YVGNFGISILIVTVIIKLLMF), 431-451 (LPILVQIPVFFSIYKVLYVTI), 476-496 (LFGLLPFAPPSFLMIGAWPIL), and 522-542 (FMPLIFLFMFSSFPVGLLIYW).

This sequence belongs to the OXA1/ALB3/YidC family. Type 1 subfamily. As to quaternary structure, interacts with the Sec translocase complex via SecD. Specifically interacts with transmembrane segments of nascent integral membrane proteins during membrane integration.

The protein localises to the cell inner membrane. Functionally, required for the insertion and/or proper folding and/or complex formation of integral membrane proteins into the membrane. Involved in integration of membrane proteins that insert both dependently and independently of the Sec translocase complex, as well as at least some lipoproteins. Aids folding of multispanning membrane proteins. This is Membrane protein insertase YidC from Rickettsia prowazekii (strain Madrid E).